We begin with the raw amino-acid sequence, 314 residues long: F-box protein AUF2 (314 aa).

Residues 1-49 (MDVFDGLPDPIIVDILNKVGDVKTLLRCSSLSKRFNSLVPQSESLTLRL) enclose the F-box domain.

In terms of assembly, part of a SCF (ASK-cullin-F-box) protein ligase complex.

Its subcellular location is the nucleus. Its pathway is protein modification; protein ubiquitination. In terms of biological role, component of SCF(ASK-cullin-F-box) E3 ubiquitin ligase complexes, which may mediate the ubiquitination and subsequent proteasomal degradation of target proteins. The protein is F-box protein AUF2 of Arabidopsis thaliana (Mouse-ear cress).